Consider the following 1083-residue polypeptide: Error-prone DNA polymerase (1083 aa).

It belongs to the DNA polymerase type-C family. DnaE2 subfamily.

It localises to the cytoplasm. The enzyme catalyses DNA(n) + a 2'-deoxyribonucleoside 5'-triphosphate = DNA(n+1) + diphosphate. Its function is as follows. DNA polymerase involved in damage-induced mutagenesis and translesion synthesis (TLS). It is not the major replicative DNA polymerase. The chain is Error-prone DNA polymerase from Xanthomonas oryzae pv. oryzae (strain KACC10331 / KXO85).